The sequence spans 234 residues: Ribose-5-phosphate isomerase A (234 aa).

Substrate-binding positions include 35–38, 91–94, and 105–108; these read SGTT, DGAD, and KGGG. The active-site Proton acceptor is E114. Residue K132 participates in substrate binding.

It belongs to the ribose 5-phosphate isomerase family. In terms of assembly, homodimer.

The enzyme catalyses aldehydo-D-ribose 5-phosphate = D-ribulose 5-phosphate. It participates in carbohydrate degradation; pentose phosphate pathway; D-ribose 5-phosphate from D-ribulose 5-phosphate (non-oxidative stage): step 1/1. Functionally, catalyzes the reversible conversion of ribose-5-phosphate to ribulose 5-phosphate. The sequence is that of Ribose-5-phosphate isomerase A from Methanococcus aeolicus (strain ATCC BAA-1280 / DSM 17508 / OCM 812 / Nankai-3).